We begin with the raw amino-acid sequence, 404 residues long: Exodeoxyribonuclease 7 large subunit (404 aa).

Belongs to the XseA family. Heterooligomer composed of large and small subunits.

The protein localises to the cytoplasm. The catalysed reaction is Exonucleolytic cleavage in either 5'- to 3'- or 3'- to 5'-direction to yield nucleoside 5'-phosphates.. In terms of biological role, bidirectionally degrades single-stranded DNA into large acid-insoluble oligonucleotides, which are then degraded further into small acid-soluble oligonucleotides. The polypeptide is Exodeoxyribonuclease 7 large subunit (Ruminiclostridium cellulolyticum (strain ATCC 35319 / DSM 5812 / JCM 6584 / H10) (Clostridium cellulolyticum)).